Here is a 296-residue protein sequence, read N- to C-terminus: Phosphatidylglycerol--prolipoprotein diacylglyceryl transferase (296 aa).

Transmembrane regions (helical) follow at residues 17–37 (LAVR…IVVG), 59–79 (MMFY…VLFY), 97–117 (GGMS…LFAW), 129–149 (FVAP…FING), 204–224 (SQLY…FLFA), 230–250 (MGAI…TVEF), and 257–277 (FLGL…PMIL). Position 142 (arginine 142) interacts with a 1,2-diacyl-sn-glycero-3-phospho-(1'-sn-glycerol).

This sequence belongs to the Lgt family.

It localises to the cell inner membrane. It carries out the reaction L-cysteinyl-[prolipoprotein] + a 1,2-diacyl-sn-glycero-3-phospho-(1'-sn-glycerol) = an S-1,2-diacyl-sn-glyceryl-L-cysteinyl-[prolipoprotein] + sn-glycerol 1-phosphate + H(+). The protein operates within protein modification; lipoprotein biosynthesis (diacylglyceryl transfer). Functionally, catalyzes the transfer of the diacylglyceryl group from phosphatidylglycerol to the sulfhydryl group of the N-terminal cysteine of a prolipoprotein, the first step in the formation of mature lipoproteins. The chain is Phosphatidylglycerol--prolipoprotein diacylglyceryl transferase from Burkholderia cenocepacia (strain HI2424).